A 279-amino-acid chain; its full sequence is Virginiamycin B lyase (279 aa).

His-215 contributes to the substrate binding site. Glu-253 is a binding site for Mg(2+). The active-site Proton acceptor is the His-255. Mg(2+) is bound at residue Glu-270.

The protein belongs to the Vgb family. In terms of assembly, monomer. It depends on Mg(2+) as a cofactor.

Its function is as follows. Inactivates the type B streptogramin antibiotics by linearizing the lactone ring at the ester linkage, generating a free phenylglycine carboxylate and converting the threonyl moiety into 2-amino-butenoic acid. The sequence is that of Virginiamycin B lyase from Nocardia farcinica (strain IFM 10152).